Consider the following 410-residue polypeptide: Peptidase T (410 aa).

His79 is a binding site for Zn(2+). Residue Asp81 is part of the active site. Asp142 is a Zn(2+) binding site. The active-site Proton acceptor is the Glu176. Positions 177, 199, and 381 each coordinate Zn(2+).

The protein belongs to the peptidase M20B family. Requires Zn(2+) as cofactor.

It is found in the cytoplasm. The enzyme catalyses Release of the N-terminal residue from a tripeptide.. Its function is as follows. Cleaves the N-terminal amino acid of tripeptides. This chain is Peptidase T, found in Listeria monocytogenes serotype 4a (strain HCC23).